A 368-amino-acid chain; its full sequence is MVTGWHRPTWIEIDRAAIRENIKNEQNKLPESVDLWAVVKANAYGHGIIEVARTAKEAGAKGFCVAILDEALALREAGFQDDFILVLGATRKEDANLAAKNHISLTVFREDWLENLTLEATLRIHLKVDSGMGRLGIRTTEEARRIEATSTNDHQLQLEGIYTHFATADQLETSYFEQQLAKFQTILTSLKKRPTYVHTANSAASLLQPQIGFDAIRFGISMYGLTPSTEIKTSLPFELKPALALYTEMVHVKELAPGDSVSYGATYTATEREWVATLPIGYADGLIRHYSGFHVLVDGEPAPIIGRVCMDQTIIKLPREFQTGSKVTIIGKDHGNTVTADDAAQYLDTINYEVTCLLNERIPRKYIH.

The active-site Proton acceptor; specific for D-alanine is lysine 40. At lysine 40 the chain carries N6-(pyridoxal phosphate)lysine. Position 134 (arginine 134) interacts with substrate. The Proton acceptor; specific for L-alanine role is filled by tyrosine 263. Residue methionine 310 participates in substrate binding.

Belongs to the alanine racemase family. Pyridoxal 5'-phosphate serves as cofactor.

It carries out the reaction L-alanine = D-alanine. The protein operates within amino-acid biosynthesis; D-alanine biosynthesis; D-alanine from L-alanine: step 1/1. Catalyzes the interconversion of L-alanine and D-alanine. May also act on other amino acids. This is Alanine racemase (alr) from Listeria monocytogenes serotype 1/2a (strain 10403S).